Reading from the N-terminus, the 311-residue chain is Chalcone synthase 4 (311 aa).

The active site involves C164.

This sequence belongs to the thiolase-like superfamily. Chalcone/stilbene synthases family.

It carries out the reaction (E)-4-coumaroyl-CoA + 3 malonyl-CoA + 3 H(+) = 2',4,4',6'-tetrahydroxychalcone + 3 CO2 + 4 CoA. It participates in secondary metabolite biosynthesis; flavonoid biosynthesis. Its function is as follows. The primary product of this enzyme is 4,2',4',6'-tetrahydroxychalcone (also termed naringenin-chalcone or chalcone) which can under specific conditions spontaneously isomerize into naringenin. The sequence is that of Chalcone synthase 4 (CHS4) from Trifolium subterraneum (Subterranean clover).